The following is a 452-amino-acid chain: Pup--protein ligase (452 aa).

Mg(2+) is bound at residue Glu-9. Residue Arg-53 coordinates ATP. Tyr-55 serves as a coordination point for Mg(2+). Asp-57 (proton acceptor) is an active-site residue. Mg(2+) is bound at residue Glu-63. 2 residues coordinate ATP: Thr-66 and Trp-419.

The protein belongs to the Pup ligase/Pup deamidase family. Pup-conjugating enzyme subfamily.

It catalyses the reaction ATP + [prokaryotic ubiquitin-like protein]-L-glutamate + [protein]-L-lysine = ADP + phosphate + N(6)-([prokaryotic ubiquitin-like protein]-gamma-L-glutamyl)-[protein]-L-lysine.. The protein operates within protein degradation; proteasomal Pup-dependent pathway. It participates in protein modification; protein pupylation. Catalyzes the covalent attachment of the prokaryotic ubiquitin-like protein modifier Pup to the proteasomal substrate proteins, thereby targeting them for proteasomal degradation. This tagging system is termed pupylation. The ligation reaction involves the side-chain carboxylate of the C-terminal glutamate of Pup and the side-chain amino group of a substrate lysine. The protein is Pup--protein ligase of Mycobacterium sp. (strain JLS).